A 309-amino-acid chain; its full sequence is Vacuolar membrane protein YOR292C (309 aa).

Over 1-52 (MPLQLFGRDQIVVHYDNGNMSNDDQNHQSVLGSWTRRAAAALRTLMNKRIQR) the chain is Vacuolar. N-linked (GlcNAc...) asparagine glycosylation occurs at asparagine 19. Residues 53-73 (ITLTHWLLLVIWVTSLWKFTS) traverse the membrane as a helical segment. The Cytoplasmic segment spans residues 74–81 (HYRQLYAN). A helical membrane pass occupies residues 82 to 102 (SAVFATLCTNILLFGISDILA). Residues 103–183 (QSIACFYSYH…KTDTFDFFRW (81 aa)) are Vacuolar-facing. The N-linked (GlcNAc...) asparagine glycan is linked to asparagine 121. The helical transmembrane segment at 184–204 (GCFMFWGFFISFFQAPWYKFL) threads the bilayer. Over 205–225 (NFFYTEDPTVVQVFERVLSDQ) the chain is Cytoplasmic. A helical transmembrane segment spans residues 226–246 (LLYSPISLYCFFMFSNYVMEG). The Vacuolar segment spans residues 247-260 (GDKDTLGKKIQRLY). Residues 261–281 (ISTLGCNYLVWPMVQFINFLI) traverse the membrane as a helical segment. Residues 282 to 309 (MPRDFQAPFSSSVGVVWNCFLSMRNASK) are Cytoplasmic-facing.

This sequence belongs to the peroxisomal membrane protein PXMP2/4 family. In terms of processing, N-glycosylated.

Its subcellular location is the vacuole membrane. The chain is Vacuolar membrane protein YOR292C from Saccharomyces cerevisiae (strain ATCC 204508 / S288c) (Baker's yeast).